The chain runs to 535 residues: Berberine bridge enzyme-like 3 (535 aa).

Residues 1 to 19 (MKEALFGLYLVLLVSGLEA) form the signal peptide. Cys-32 and Cys-95 are joined by a disulfide. An N-linked (GlcNAc...) asparagine glycan is attached at Asn-52. One can recognise an FAD-binding PCMH-type domain in the interval 73 to 247 (NNKNLLAIVV…LSWKINLVEV (175 aa)). The segment at residues 110–172 (HDNEGLSYVS…QTLAFPAGIC (63 aa)) is a cross-link (6-(S-cysteinyl)-8alpha-(pros-histidyl)-FAD (His-Cys)). Residues Asn-214, Asn-257, Asn-292, Asn-321, Asn-341, Asn-415, Asn-439, and Asn-444 are each glycosylated (N-linked (GlcNAc...) asparagine).

Belongs to the oxygen-dependent FAD-linked oxidoreductase family. FAD serves as cofactor. The FAD cofactor is bound via a bicovalent 6-S-cysteinyl, 8alpha-N1-histidyl FAD linkage.

Its subcellular location is the endoplasmic reticulum. It localises to the cell membrane. The protein localises to the secreted. The protein resides in the cell wall. Flavin-dependent oxidoreductase involved in the biosynthetic pathway to 4-hydroxyindole-3-carbonyl nitrile (4-OH-ICN), a cyanogenic metabolite required for inducible pathogen defense. Converts indole cyanohydrin into indole-3-carbonyl nitrile (ICN). The chain is Berberine bridge enzyme-like 3 from Arabidopsis thaliana (Mouse-ear cress).